A 564-amino-acid polypeptide reads, in one-letter code: Dihydroxy-acid dehydratase (564 aa).

Mg(2+) is bound at residue aspartate 80. Cysteine 121 is a [2Fe-2S] cluster binding site. Mg(2+) contacts are provided by aspartate 122 and lysine 123. Position 123 is an N6-carboxylysine (lysine 123). Cysteine 194 contributes to the [2Fe-2S] cluster binding site. Glutamate 447 serves as a coordination point for Mg(2+). Serine 473 acts as the Proton acceptor in catalysis.

The protein belongs to the IlvD/Edd family. In terms of assembly, homodimer. The cofactor is [2Fe-2S] cluster. It depends on Mg(2+) as a cofactor.

It catalyses the reaction (2R)-2,3-dihydroxy-3-methylbutanoate = 3-methyl-2-oxobutanoate + H2O. The catalysed reaction is (2R,3R)-2,3-dihydroxy-3-methylpentanoate = (S)-3-methyl-2-oxopentanoate + H2O. The protein operates within amino-acid biosynthesis; L-isoleucine biosynthesis; L-isoleucine from 2-oxobutanoate: step 3/4. It participates in amino-acid biosynthesis; L-valine biosynthesis; L-valine from pyruvate: step 3/4. In terms of biological role, functions in the biosynthesis of branched-chain amino acids. Catalyzes the dehydration of (2R,3R)-2,3-dihydroxy-3-methylpentanoate (2,3-dihydroxy-3-methylvalerate) into 2-oxo-3-methylpentanoate (2-oxo-3-methylvalerate) and of (2R)-2,3-dihydroxy-3-methylbutanoate (2,3-dihydroxyisovalerate) into 2-oxo-3-methylbutanoate (2-oxoisovalerate), the penultimate precursor to L-isoleucine and L-valine, respectively. This Listeria welshimeri serovar 6b (strain ATCC 35897 / DSM 20650 / CCUG 15529 / CIP 8149 / NCTC 11857 / SLCC 5334 / V8) protein is Dihydroxy-acid dehydratase.